Here is a 2515-residue protein sequence, read N- to C-terminus: Protein tudor (2515 aa).

3 positions are modified to phosphoserine: Ser-226, Ser-235, and Ser-239. 2 Tudor domains span residues 455–513 (APEL…LLEI) and 641–696 (QLIL…HLEM). Ser-800 is modified (phosphoserine). The segment at 840–996 (QAVKSVSGSK…SSSESVAAAK (157 aa)) is disordered. Low complexity predominate over residues 890–900 (STGSYSSGMSS). Residues 906–917 (RQQNGRTPIQSP) are compositionally biased toward polar residues. Residues 918-927 (RHNEKQEAKK) are compositionally biased toward basic and acidic residues. 2 stretches are compositionally biased toward polar residues: residues 943–954 (GQQGNQRSQNAP) and 964–976 (QKSTLDGNISSKR). A compositionally biased stretch (low complexity) spans 977 to 995 (SSGVGSDIASSSSESVAAA). 2 Tudor domains span residues 1062–1122 (QLKV…FADP) and 1355–1414 (KFDV…FYEH). The interval 1515 to 1589 (EEDKGRKETV…KPATPVPEVV (75 aa)) is disordered. Residues 1540 to 1553 (NDKDREPKKSKPAE) show a composition bias toward basic and acidic residues. The segment covering 1569-1584 (SPVPAEPAPVPKPATP) has biased composition (pro residues). Tudor domains lie at 1662-1718 (NVVN…SHIE), 1839-1898 (GFEK…SLPS), 2023-2082 (KAAV…LIKP), 2211-2269 (TTNS…PIPS), and 2392-2451 (DLKE…KPAR).

May form part of a piRNA processing complex consisting of tud, aub and AGO3. Interacts with AGO3 (when symmetrically dimethylated on Arg residues) and aub (when symmetrically dimethylated on Arg residues). Interacts with vls. Interacts with me31B/DDX6 (when symmetrically dimethylated on Arg residues).

It localises to the cytoplasm. It is found in the perinuclear region. Its subcellular location is the cytoplasmic ribonucleoprotein granule. Its function is as follows. May act via the Piwi-interacting RNA (piRNA) metabolic process mediated by aub and AGO3 Piwi proteins, which mediates the repression of transposable elements during meiosis by forming complexes composed of piRNAs and Piwi proteins and governs the methylation and subsequent repression of transposons. Required during oogenesis for the formation of primordial germ cells and for normal abdominal segmentation. Not involved in repression of retroelements. The chain is Protein tudor from Drosophila melanogaster (Fruit fly).